Here is a 400-residue protein sequence, read N- to C-terminus: MKNLDDLLSEGVRGRRVLVRADLNVPLDGDRITDDGRVRASLPTIEKLTGAGARVVVTAHLGRPKGEPDPKFSLAPVAARLGELLGADVALAGDVVGESAKSAVAAQADGSVVLLENVRFDARETSKDDAERGALADELAALVGDGAAFVSDGFGVVHRKQASVYDIAKRVPGYAGGLVLSEVEVLRTLTGDPRRPYAVVLGGSKVSDKLGVIQALLPKVDKLLIGGGMAYTFLAAQGHSVGKSLLQQDQVESTCKLLEEHGDKLVLPVDVVVADRFAADAESRVVDADAIPADWMGLDIGPRSVELFAGILAGSRTVFWNGPAGVFEFPAFAEGTRGIAQAIVDSGSFSVVGGGDSAAAVRSLGLPEDGFSHISTGGGASLEYLEGKELPGVSVLEEGR.

Substrate is bound by residues 22 to 24 (DLN), R37, 60 to 63 (HLGR), R119, and R159. ATP contacts are provided by residues K209, G297, E328, and 354–357 (GGDS).

Belongs to the phosphoglycerate kinase family. Monomer.

It is found in the cytoplasm. The enzyme catalyses (2R)-3-phosphoglycerate + ATP = (2R)-3-phospho-glyceroyl phosphate + ADP. It functions in the pathway carbohydrate degradation; glycolysis; pyruvate from D-glyceraldehyde 3-phosphate: step 2/5. In Saccharopolyspora erythraea (strain ATCC 11635 / DSM 40517 / JCM 4748 / NBRC 13426 / NCIMB 8594 / NRRL 2338), this protein is Phosphoglycerate kinase.